The sequence spans 177 residues: Cytoglobin-1 (177 aa).

A Globin domain is found at 16-165; it reads PLTDKERVMI…LCCSIKAVYE (150 aa). Positions 79 and 111 each coordinate heme b.

This sequence belongs to the globin family. As to quaternary structure, monomeric.

It is found in the cytoplasm. It localises to the nucleus. The enzyme catalyses Fe(II)-heme b-[protein] + nitric oxide + O2 = Fe(III)-heme b-[protein] + nitrate. The catalysed reaction is Fe(III)-heme b-[protein] + nitric oxide + H2O = Fe(II)-heme b-[protein] + nitrite + 2 H(+). It carries out the reaction 2 superoxide + 2 H(+) = H2O2 + O2. It catalyses the reaction H2O2 + AH2 = A + 2 H2O. In terms of biological role, probable multifunctional globin with a hexacoordinated heme iron required for the catalysis of various reactions depending on redox condition of the cell as well as oxygen availability. Has a nitric oxide dioxygenase (NOD) activity and is most probably involved in cell-mediated and oxygen-dependent nitric oxide consumption. Under normoxic conditions functions as a nitric oxide dioxygenase (NOD) but under hypoxic conditions the globin may switch its function to that of a nitrite (NO2) reductase (NiR), generating nitric oxide. Could also have peroxidase and superoxide dismutase activities, detoxifying reactive oxygen species and protecting cells against oxidative stress. Also binds dioxygen with low affinity and could function as an oxygen sensor but has probably no function as a respiratory oxygen carrier. The chain is Cytoglobin-1 from Oryzias latipes (Japanese rice fish).